Consider the following 137-residue polypeptide: Endoribonuclease YbeY (137 aa).

Zn(2+) is bound by residues H105, H109, and D115.

It belongs to the endoribonuclease YbeY family. It depends on Zn(2+) as a cofactor.

The protein localises to the cytoplasm. In terms of biological role, single strand-specific metallo-endoribonuclease involved in late-stage 70S ribosome quality control and in maturation of the 3' terminus of the 16S rRNA. This Chlorobaculum tepidum (strain ATCC 49652 / DSM 12025 / NBRC 103806 / TLS) (Chlorobium tepidum) protein is Endoribonuclease YbeY.